Here is a 208-residue protein sequence, read N- to C-terminus: Small ribosomal subunit protein uS4 (208 aa).

The S4 RNA-binding domain maps to 97–160 (SRLDNIVFRL…KKNDKIAEAL (64 aa)).

This sequence belongs to the universal ribosomal protein uS4 family. As to quaternary structure, part of the 30S ribosomal subunit. Contacts protein S5. The interaction surface between S4 and S5 is involved in control of translational fidelity.

One of the primary rRNA binding proteins, it binds directly to 16S rRNA where it nucleates assembly of the body of the 30S subunit. In terms of biological role, with S5 and S12 plays an important role in translational accuracy. The polypeptide is Small ribosomal subunit protein uS4 (Mesoplasma florum (strain ATCC 33453 / NBRC 100688 / NCTC 11704 / L1) (Acholeplasma florum)).